A 306-amino-acid polypeptide reads, in one-letter code: Probable arylamine N-acetyltransferase 3 (306 aa).

C75 functions as the Acyl-thioester intermediate in the catalytic mechanism. Catalysis depends on residues H115 and D130.

It belongs to the arylamine N-acetyltransferase family.

The catalysed reaction is an arylamine + acetyl-CoA = an N-acetylarylamine + CoA. The chain is Probable arylamine N-acetyltransferase 3 from Dictyostelium discoideum (Social amoeba).